The sequence spans 145 residues: Hydrophobin-like protein 1 (145 aa).

The N-terminal stretch at 1–20 (MYLLQISISLLLLISTAATA) is a signal peptide. N-linked (GlcNAc...) asparagine glycosylation is present at Asn-36. Disulfide bonds link Cys-61–Cys-121, Cys-71–Cys-113, Cys-72–Cys-104, and Cys-122–Cys-139.

The protein resides in the secreted. The protein localises to the cell wall. Functionally, aerial growth, conidiation, and dispersal of filamentous fungi in the environment rely upon a capability of their secreting small amphipathic proteins called hydrophobins (HPBs) with low sequence identity. Class I can self-assemble into an outermost layer of rodlet bundles on aerial cell surfaces, conferring cellular hydrophobicity that supports fungal growth, development and dispersal; whereas Class II form highly ordered films at water-air interfaces through intermolecular interactions but contribute nothing to the rodlet structure. In Botryotinia fuckeliana, hydrophobins are not involved in conferring surface hydrophobicity to conidia and aerial hyphae and their function in sclerotia and fruiting bodies remains to be investigated. The protein is Hydrophobin-like protein 1 of Botryotinia fuckeliana (strain B05.10) (Noble rot fungus).